Here is a 231-residue protein sequence, read N- to C-terminus: A-type ATP synthase subunit D (231 aa).

Belongs to the V-ATPase D subunit family. As to quaternary structure, has multiple subunits with at least A(3), B(3), C, D, E, F, H, I and proteolipid K(x).

The protein localises to the cell membrane. Component of the A-type ATP synthase that produces ATP from ADP in the presence of a proton gradient across the membrane. The chain is A-type ATP synthase subunit D from Methanobrevibacter smithii (strain ATCC 35061 / DSM 861 / OCM 144 / PS).